The sequence spans 1324 residues: Mediator of RNA polymerase II transcription subunit 13 (1324 aa).

Disordered stretches follow at residues 296–346 (ESGV…PPEA), 386–455 (FFDD…ATTA), 535–590 (GRFF…EPEI), 607–631 (HDDK…SNNS), 694–816 (KGGQ…VPSA), and 1151–1198 (TGSD…PDIY). Polar residues predominate over residues 298-331 (GVNTNESTAAQPQPAQNGTNSMAPAAGTTNATTQ). A compositionally biased stretch (acidic residues) spans 398–407 (DGDNDNGNDN). Residues 408-442 (DNDKADAMDVDVKEEAKKEEMIKKETKEEVPVKEE) show a composition bias toward basic and acidic residues. Residues 546-566 (DNEGSSDNTGDSSDSGDGSES) show a composition bias toward low complexity. 2 stretches are compositionally biased toward basic and acidic residues: residues 567–578 (VPRDVKRQKVDE) and 607–617 (HDDKPAKKIDS). Low complexity-rich tracts occupy residues 618-631 (SNDT…SNNS) and 724-743 (SNAS…QMGA). Residues 750 to 784 (LSPSRGATPQPEGSSPETRPSNWTPGITSQVNSAA) are compositionally biased toward polar residues. Low complexity-rich tracts occupy residues 785-816 (SSPV…VPSA) and 1172-1184 (TGAA…GSAP).

This sequence belongs to the Mediator complex subunit 13 family. In terms of assembly, component of the SRB8-11 complex, which itself associates with the Mediator complex.

It is found in the nucleus. In terms of biological role, component of the SRB8-11 complex. The SRB8-11 complex is a regulatory module of the Mediator complex which is itself involved in regulation of basal and activated RNA polymerase II-dependent transcription. The SRB8-11 complex may be involved in the transcriptional repression of a subset of genes regulated by Mediator. It may inhibit the association of the Mediator complex with RNA polymerase II to form the holoenzyme complex. The chain is Mediator of RNA polymerase II transcription subunit 13 (SSN2) from Yarrowia lipolytica (strain CLIB 122 / E 150) (Yeast).